An 876-amino-acid chain; its full sequence is Exonuclease mut-7 homolog (876 aa).

The 55-residue stretch at 517 to 571 (GLSLLVQQVLGTALDKTQQLSNWDRRPLCEEQVIYAAADAYCLLEVHQALCREPA) folds into the 3'-5' exonuclease domain. 2 disordered regions span residues 578–607 (DLAGSRRPRHRERPGARKPPGLQKASAPAA) and 751–781 (SHQEGPRSSGDEATQSQAVQEPGPAPDAAPE).

The protein belongs to the mut-7 family. It depends on Mg(2+) as a cofactor.

Possesses 3'-5' exoribonuclease activity. Required for 3'-end trimming of AGO1-bound miRNAs. This Homo sapiens (Human) protein is Exonuclease mut-7 homolog (EXD3).